Here is a 109-residue protein sequence, read N- to C-terminus: Spermidine export protein MdtI (109 aa).

Residues 1–5 (MAQFE) lie on the Periplasmic side of the membrane. A helical membrane pass occupies residues 6-26 (WVHAAWLALAIVLEIVANVFL). Topologically, residues 27–35 (KFSDGFRRK) are cytoplasmic. Residues 36-56 (IFGLLSLAAVLAAFSALSQAV) traverse the membrane as a helical segment. At 57 to 63 (KGIDLSV) the chain is on the periplasmic side. Residues 64 to 84 (VYALWGGFGIAATLAAGWILF) traverse the membrane as a helical segment. At 85-87 (GQR) the chain is on the cytoplasmic side. Residues 88–108 (LNRKGWIGLVLLLAGMIMVKL) traverse the membrane as a helical segment. A topological domain (periplasmic) is located at residue Ala-109.

This sequence belongs to the drug/metabolite transporter (DMT) superfamily. Small multidrug resistance (SMR) (TC 2.A.7.1) family. MdtI subfamily. In terms of assembly, forms a complex with MdtJ.

The protein resides in the cell inner membrane. Functionally, catalyzes the excretion of spermidine. This chain is Spermidine export protein MdtI (mdtI), found in Shigella flexneri.